Consider the following 354-residue polypeptide: Guanine nucleotide-binding protein G(o) subunit alpha (354 aa).

The N-myristoyl glycine moiety is linked to residue glycine 2. A lipid anchor (S-palmitoyl cysteine) is attached at cysteine 3. The region spanning 32 to 354 (KDIKLLLLGA…ANNLRGCGLY (323 aa)) is the G-alpha domain. The tract at residues 35-48 (KLLLLGAGESGKST) is G1 motif. GTP contacts are provided by residues 40–47 (GAGESGKS), 176–182 (LRTRVKT), 201–205 (DVGGQ), 270–273 (NKKD), and alanine 326. Residues serine 47 and threonine 182 each coordinate Mg(2+). The segment at 174–182 (DILRTRVKT) is G2 motif. Residues 197-206 (FKLFDVGGQR) form a G3 motif region. A G4 motif region spans residues 266 to 273 (ILFLNKKD). The segment at 324–329 (TCATDT) is G5 motif.

The protein belongs to the G-alpha family. G(i/o/t/z) subfamily. In terms of assembly, g proteins are composed of 3 units; alpha, beta and gamma. The alpha chain contains the guanine nucleotide binding site.

Its function is as follows. Guanine nucleotide-binding proteins (G proteins) are involved as modulators or transducers in various transmembrane signaling systems. The G(o) protein function is not clear. In Locusta migratoria (Migratory locust), this protein is Guanine nucleotide-binding protein G(o) subunit alpha.